Here is a 308-residue protein sequence, read N- to C-terminus: Glutaminase 2 (308 aa).

Serine 66, asparagine 117, glutamate 161, asparagine 168, tyrosine 192, tyrosine 244, and valine 262 together coordinate substrate.

The protein belongs to the glutaminase family. Homotetramer.

It catalyses the reaction L-glutamine + H2O = L-glutamate + NH4(+). The polypeptide is Glutaminase 2 (Shigella flexneri).